Consider the following 166-residue polypeptide: Glycine-rich RNA-binding protein GRP1A (166 aa).

The RRM domain maps to 8–86; the sequence is YRCFVGGLAW…RSITVNEAQS (79 aa). The interval 68 to 166 is disordered; sequence GMNGQDLDGR…YGGSGGGGGW (99 aa). Gly residues-rich tracts occupy residues 88 to 146 and 153 to 166; these read GSGG…YGGG and EGGG…GGGW.

Predominantly expressed in meristematic and growing tissue.

Its subcellular location is the nucleus. Functionally, may play a general role in circadian phenomena associated with meristematic tissue. The polypeptide is Glycine-rich RNA-binding protein GRP1A (Sinapis alba (White mustard)).